Here is a 1179-residue protein sequence, read N- to C-terminus: DNA-directed RNA polymerase subunit beta' (1179 aa).

Zn(2+) contacts are provided by Cys-60, Cys-62, Cys-75, and Cys-78. Residues Asp-449, Asp-451, and Asp-453 each coordinate Mg(2+). Cys-796, Cys-871, Cys-878, and Cys-881 together coordinate Zn(2+).

Belongs to the RNA polymerase beta' chain family. As to quaternary structure, the RNAP catalytic core consists of 2 alpha, 1 beta, 1 beta' and 1 omega subunit. When a sigma factor is associated with the core the holoenzyme is formed, which can initiate transcription. It depends on Mg(2+) as a cofactor. Zn(2+) is required as a cofactor.

The catalysed reaction is RNA(n) + a ribonucleoside 5'-triphosphate = RNA(n+1) + diphosphate. Functionally, DNA-dependent RNA polymerase catalyzes the transcription of DNA into RNA using the four ribonucleoside triphosphates as substrates. The protein is DNA-directed RNA polymerase subunit beta' of Symbiobacterium thermophilum (strain DSM 24528 / JCM 14929 / IAM 14863 / T).